We begin with the raw amino-acid sequence, 113 residues long: Nucleoid-associated protein SYNW0027 (113 aa).

Belongs to the YbaB/EbfC family. As to quaternary structure, homodimer.

Its subcellular location is the cytoplasm. The protein localises to the nucleoid. Its function is as follows. Binds to DNA and alters its conformation. May be involved in regulation of gene expression, nucleoid organization and DNA protection. This is Nucleoid-associated protein SYNW0027 from Parasynechococcus marenigrum (strain WH8102).